We begin with the raw amino-acid sequence, 334 residues long: Ketol-acid reductoisomerase (NADP(+)) (334 aa).

The region spanning 2-182 (PKMYYEKDTD…GGARAGVLET (181 aa)) is the KARI N-terminal Rossmann domain. NADP(+) is bound by residues 25–28 (YGSQ), Ser-51, Ser-53, and 83–86 (DEKQ). The active site involves His-108. Gly-134 is an NADP(+) binding site. Positions 183–328 (TFKDETETDL…KELRGMMSWI (146 aa)) constitute a KARI C-terminal knotted domain. 4 residues coordinate Mg(2+): Asp-191, Glu-195, Glu-227, and Glu-231. Ser-252 provides a ligand contact to substrate.

Belongs to the ketol-acid reductoisomerase family. It depends on Mg(2+) as a cofactor.

It carries out the reaction (2R)-2,3-dihydroxy-3-methylbutanoate + NADP(+) = (2S)-2-acetolactate + NADPH + H(+). The catalysed reaction is (2R,3R)-2,3-dihydroxy-3-methylpentanoate + NADP(+) = (S)-2-ethyl-2-hydroxy-3-oxobutanoate + NADPH + H(+). The protein operates within amino-acid biosynthesis; L-isoleucine biosynthesis; L-isoleucine from 2-oxobutanoate: step 2/4. It participates in amino-acid biosynthesis; L-valine biosynthesis; L-valine from pyruvate: step 2/4. In terms of biological role, involved in the biosynthesis of branched-chain amino acids (BCAA). Catalyzes an alkyl-migration followed by a ketol-acid reduction of (S)-2-acetolactate (S2AL) to yield (R)-2,3-dihydroxy-isovalerate. In the isomerase reaction, S2AL is rearranged via a Mg-dependent methyl migration to produce 3-hydroxy-3-methyl-2-ketobutyrate (HMKB). In the reductase reaction, this 2-ketoacid undergoes a metal-dependent reduction by NADPH to yield (R)-2,3-dihydroxy-isovalerate. The polypeptide is Ketol-acid reductoisomerase (NADP(+)) (Clostridium beijerinckii (strain ATCC 51743 / NCIMB 8052) (Clostridium acetobutylicum)).